A 581-amino-acid polypeptide reads, in one-letter code: Protein phosphatase 2C 70 (581 aa).

Residues 1-7 lie on the Extracellular side of the membrane; it reads MAMIGMN. Residues 8-28 form a helical membrane-spanning segment; it reads IIGLFMVLMLLLISLIILFAC. Over 29–581 the chain is Cytoplasmic; the sequence is KPWRYFSRFR…IIYLDFDTSL (553 aa). One can recognise an FHA domain in the interval 208-259; the sequence is VKLGRVSPSDLALKDSEVSGKHAQITWNSTKFKWELVDMGSLNGTLVNSHSI. The region spanning 304–577 is the PPM-type phosphatase domain; that stretch reads KIGVASDPMA…DNTSIIYLDF (274 aa). Mn(2+) is bound by residues D346, G347, D521, and D568.

In terms of assembly, association of RLK5 with kapp domain is dependent on phosphorylation of RLK5 and can be abolished by dephosphorylation. Interacts with SERK1 and CDC48A. Component of the SERK1 signaling complex, composed of KAPP, CDC48A, GRF6 or GRF7, SERK1, SERK2, SERK3/BAK1 and BRI1. Interacts with CLV1. Mg(2+) serves as cofactor. Requires Mn(2+) as cofactor. In terms of tissue distribution, expressed in all tissues examined.

The protein resides in the cell membrane. The enzyme catalyses O-phospho-L-seryl-[protein] + H2O = L-seryl-[protein] + phosphate. The catalysed reaction is O-phospho-L-threonyl-[protein] + H2O = L-threonyl-[protein] + phosphate. Its function is as follows. Dephosphorylates the Ser/Thr receptor-like kinase RLK5. May function as a signaling component in a pathway involving RLK5. Binds and dephosphorylates CLAVATA1 (CLV1). Functions as a negative regulator of the CLV1 signaling in plant development. Dephosphorylates SERK1 receptor kinase on threonine residues in the A-loop. Dephosphorylation of SERK1 controls SERK1 internalization. Component of a signaling pathway which mediates adaptation to NaCl stress. Is not a component of the SALT OVERLY SENSITIVE (SOS) pathway. This chain is Protein phosphatase 2C 70, found in Arabidopsis thaliana (Mouse-ear cress).